The sequence spans 88 residues: Small ribosomal subunit protein bS16c (88 aa).

Belongs to the bacterial ribosomal protein bS16 family.

The protein localises to the plastid. Its subcellular location is the chloroplast. The sequence is that of Small ribosomal subunit protein bS16c from Gossypium barbadense (Sea Island cotton).